The sequence spans 304 residues: uncharacterized protein (304 aa).

This is an uncharacterized protein from Methanocaldococcus jannaschii (strain ATCC 43067 / DSM 2661 / JAL-1 / JCM 10045 / NBRC 100440) (Methanococcus jannaschii).